The primary structure comprises 139 residues: S-adenosylmethionine decarboxylase proenzyme (139 aa).

The Schiff-base intermediate with substrate; via pyruvic acid role is filled by S63. The residue at position 63 (S63) is a Pyruvic acid (Ser); by autocatalysis. Residue H68 is the Proton acceptor; for processing activity of the active site. The Proton donor; for catalytic activity role is filled by C83.

The protein belongs to the prokaryotic AdoMetDC family. Type 1 subfamily. As to quaternary structure, heterotetramer of two alpha and two beta chains arranged as a dimer of alpha/beta heterodimers. Pyruvate is required as a cofactor. Is synthesized initially as an inactive proenzyme. Formation of the active enzyme involves a self-maturation process in which the active site pyruvoyl group is generated from an internal serine residue via an autocatalytic post-translational modification. Two non-identical subunits are generated from the proenzyme in this reaction, and the pyruvate is formed at the N-terminus of the alpha chain, which is derived from the carboxyl end of the proenzyme. The post-translation cleavage follows an unusual pathway, termed non-hydrolytic serinolysis, in which the side chain hydroxyl group of the serine supplies its oxygen atom to form the C-terminus of the beta chain, while the remainder of the serine residue undergoes an oxidative deamination to produce ammonia and the pyruvoyl group blocking the N-terminus of the alpha chain.

It carries out the reaction S-adenosyl-L-methionine + H(+) = S-adenosyl 3-(methylsulfanyl)propylamine + CO2. It functions in the pathway amine and polyamine biosynthesis; S-adenosylmethioninamine biosynthesis; S-adenosylmethioninamine from S-adenosyl-L-methionine: step 1/1. Its function is as follows. Catalyzes the decarboxylation of S-adenosylmethionine to S-adenosylmethioninamine (dcAdoMet), the propylamine donor required for the synthesis of the polyamines spermine and spermidine from the diamine putrescine. The sequence is that of S-adenosylmethionine decarboxylase proenzyme from Pyrococcus abyssi (strain GE5 / Orsay).